The primary structure comprises 345 residues: Meiotically up-regulated gene 97 protein (345 aa).

2 consecutive transmembrane segments (helical) span residues 292 to 312 (MWVL…GLWM) and 319 to 329 (FAHGMLLNLGI).

Its subcellular location is the membrane. In terms of biological role, required for correct meiotic chromosome segregation. Appears to also have role in sporulation. The chain is Meiotically up-regulated gene 97 protein (mug97) from Schizosaccharomyces pombe (strain 972 / ATCC 24843) (Fission yeast).